We begin with the raw amino-acid sequence, 265 residues long: Urease accessory protein UreH (265 aa).

Belongs to the UreD family. In terms of assembly, ureH, UreF and UreG form a complex that acts as a GTP-hydrolysis-dependent molecular chaperone, activating the urease apoprotein by helping to assemble the nickel containing metallocenter of UreC. The UreE protein probably delivers the nickel.

The protein resides in the cytoplasm. In terms of biological role, required for maturation of urease via the functional incorporation of the urease nickel metallocenter. In Helicobacter pylori (strain P12), this protein is Urease accessory protein UreH.